We begin with the raw amino-acid sequence, 643 residues long: Threonine--tRNA ligase (643 aa).

One can recognise a TGS domain in the interval 1-61 (MPIITLPDGA…SVNANINIIT (61 aa)). Positions 242–533 (DHRKIGKKLD…LIEEYEGKFP (292 aa)) are catalytic. Zn(2+) contacts are provided by cysteine 333, histidine 384, and histidine 510.

This sequence belongs to the class-II aminoacyl-tRNA synthetase family. Homodimer. It depends on Zn(2+) as a cofactor.

It localises to the cytoplasm. The catalysed reaction is tRNA(Thr) + L-threonine + ATP = L-threonyl-tRNA(Thr) + AMP + diphosphate + H(+). Its function is as follows. Catalyzes the attachment of threonine to tRNA(Thr) in a two-step reaction: L-threonine is first activated by ATP to form Thr-AMP and then transferred to the acceptor end of tRNA(Thr). Also edits incorrectly charged L-seryl-tRNA(Thr). The protein is Threonine--tRNA ligase of Prochlorococcus marinus (strain SARG / CCMP1375 / SS120).